An 88-amino-acid chain; its full sequence is Small ribosomal subunit protein bS20 (88 aa).

Residues 1-27 (MANSKSAKKRALQSEKRRQHNASRRSM) are disordered.

The protein belongs to the bacterial ribosomal protein bS20 family.

In terms of biological role, binds directly to 16S ribosomal RNA. The sequence is that of Small ribosomal subunit protein bS20 from Shewanella sediminis (strain HAW-EB3).